A 442-amino-acid polypeptide reads, in one-letter code: 3-phosphoshikimate 1-carboxyvinyltransferase (442 aa).

3-phosphoshikimate contacts are provided by Lys25, Ser26, and Arg30. Lys25 is a binding site for phosphoenolpyruvate. Gly97 and Arg125 together coordinate phosphoenolpyruvate. Positions 170, 172, 323, and 350 each coordinate 3-phosphoshikimate. Gln172 provides a ligand contact to phosphoenolpyruvate. Asp323 (proton acceptor) is an active-site residue. Phosphoenolpyruvate contacts are provided by Arg354 and Arg399.

It belongs to the EPSP synthase family. In terms of assembly, monomer.

The protein resides in the cytoplasm. The catalysed reaction is 3-phosphoshikimate + phosphoenolpyruvate = 5-O-(1-carboxyvinyl)-3-phosphoshikimate + phosphate. It functions in the pathway metabolic intermediate biosynthesis; chorismate biosynthesis; chorismate from D-erythrose 4-phosphate and phosphoenolpyruvate: step 6/7. Functionally, catalyzes the transfer of the enolpyruvyl moiety of phosphoenolpyruvate (PEP) to the 5-hydroxyl of shikimate-3-phosphate (S3P) to produce enolpyruvyl shikimate-3-phosphate and inorganic phosphate. This chain is 3-phosphoshikimate 1-carboxyvinyltransferase, found in Bartonella henselae (strain ATCC 49882 / DSM 28221 / CCUG 30454 / Houston 1) (Rochalimaea henselae).